We begin with the raw amino-acid sequence, 309 residues long: Tumor necrosis factor ligand superfamily member 9 (309 aa).

Over residues 1 to 16 (MDQHTLDVEDTADARH) the composition is skewed to basic and acidic residues. Positions 1-20 (MDQHTLDVEDTADARHPAGT) are disordered. At 1–82 (MDQHTLDVED…ALNFCSRHPK (82 aa)) the chain is on the cytoplasmic side. The chain crosses the membrane as a helical; Signal-anchor for type II membrane protein span at residues 83-103 (LYGLVALVLLLLIAACVPIFT). At 104–309 (RTEPRPALTI…FLVKPDNPWE (206 aa)) the chain is on the extracellular side. N-linked (GlcNAc...) asparagine glycans are attached at residues asparagine 139, asparagine 161, and asparagine 293. The THD domain maps to 147 to 302 (VFAKLLAKNQ…NTTSFGLFLV (156 aa)).

Belongs to the tumor necrosis factor family. Homotrimer.

The protein localises to the membrane. In terms of biological role, cytokine that binds to TNFRSF9. Induces the proliferation of activated peripheral blood T-cells. May have a role in activation-induced cell death (AICD). May play a role in cognate interactions between T-cells and B-cells/macrophages. The chain is Tumor necrosis factor ligand superfamily member 9 (Tnfsf9) from Mus musculus (Mouse).